A 214-amino-acid chain; its full sequence is Probable nicotinate-nucleotide adenylyltransferase (214 aa).

Belongs to the NadD family.

It catalyses the reaction nicotinate beta-D-ribonucleotide + ATP + H(+) = deamido-NAD(+) + diphosphate. Its pathway is cofactor biosynthesis; NAD(+) biosynthesis; deamido-NAD(+) from nicotinate D-ribonucleotide: step 1/1. Its function is as follows. Catalyzes the reversible adenylation of nicotinate mononucleotide (NaMN) to nicotinic acid adenine dinucleotide (NaAD). In Thermomicrobium roseum (strain ATCC 27502 / DSM 5159 / P-2), this protein is Probable nicotinate-nucleotide adenylyltransferase.